The following is a 339-amino-acid chain: Anthranilate phosphoribosyltransferase (339 aa).

Residues Gly81, 84–85 (GD), Thr89, 91–94 (NIST), 109–117 (KHGNRNLSS), and Thr121 contribute to the 5-phospho-alpha-D-ribose 1-diphosphate site. Gly81 lines the anthranilate pocket. Residue Ser93 coordinates Mg(2+). Residue Asn112 coordinates anthranilate. Arg167 provides a ligand contact to anthranilate. Mg(2+) is bound by residues Asp226 and Glu227.

The protein belongs to the anthranilate phosphoribosyltransferase family. Homodimer. The cofactor is Mg(2+).

The catalysed reaction is N-(5-phospho-beta-D-ribosyl)anthranilate + diphosphate = 5-phospho-alpha-D-ribose 1-diphosphate + anthranilate. The protein operates within amino-acid biosynthesis; L-tryptophan biosynthesis; L-tryptophan from chorismate: step 2/5. Its function is as follows. Catalyzes the transfer of the phosphoribosyl group of 5-phosphorylribose-1-pyrophosphate (PRPP) to anthranilate to yield N-(5'-phosphoribosyl)-anthranilate (PRA). This Ruegeria pomeroyi (strain ATCC 700808 / DSM 15171 / DSS-3) (Silicibacter pomeroyi) protein is Anthranilate phosphoribosyltransferase.